We begin with the raw amino-acid sequence, 329 residues long: GTP 3',8-cyclase (329 aa).

In terms of domain architecture, Radical SAM core spans 8 to 234 (AFARKFFYLR…QIRQRSDGPA (227 aa)). Arg-17 is a binding site for GTP. Cys-24 and Cys-28 together coordinate [4Fe-4S] cluster. Tyr-30 provides a ligand contact to S-adenosyl-L-methionine. [4Fe-4S] cluster is bound at residue Cys-31. Arg-68 serves as a coordination point for GTP. Gly-72 contributes to the S-adenosyl-L-methionine binding site. Position 99 (Thr-99) interacts with GTP. Ser-123 lines the S-adenosyl-L-methionine pocket. Lys-160 serves as a coordination point for GTP. Met-194 contacts S-adenosyl-L-methionine. 2 residues coordinate [4Fe-4S] cluster: Cys-257 and Cys-260. 262 to 264 (RLR) is a GTP binding site. Position 274 (Cys-274) interacts with [4Fe-4S] cluster.

It belongs to the radical SAM superfamily. MoaA family. Monomer and homodimer. [4Fe-4S] cluster serves as cofactor.

The enzyme catalyses GTP + AH2 + S-adenosyl-L-methionine = (8S)-3',8-cyclo-7,8-dihydroguanosine 5'-triphosphate + 5'-deoxyadenosine + L-methionine + A + H(+). It functions in the pathway cofactor biosynthesis; molybdopterin biosynthesis. Catalyzes the cyclization of GTP to (8S)-3',8-cyclo-7,8-dihydroguanosine 5'-triphosphate. In Klebsiella pneumoniae (strain 342), this protein is GTP 3',8-cyclase.